The following is a 538-amino-acid chain: Putative amidase kk1C (538 aa).

The tract at residues 1–32 is disordered; that stretch reads MTEPTWKTVASEKQQQRESKIPSEWQIPKSSH. Catalysis depends on charge relay system residues K134 and S209. S233 functions as the Acyl-ester intermediate in the catalytic mechanism.

It belongs to the amidase family.

It carries out the reaction a monocarboxylic acid amide + H2O = a monocarboxylate + NH4(+). It participates in secondary metabolite biosynthesis. Functionally, putative amidase; part of the gene cluster that mediates the biosynthesis of KK-1, a novel cyclic depsipeptide with 10 residues which is a promising active compound with high activity against many plant pathogens, especially Botrytis cinerea. The role of kk1C in KK-1 biosynthesis has still to be determined. The nonribosomal peptide synthetase (NRPS) kk1B catalyzes the elongation and cyclization of the decapeptide chain composed of 1 D-lactic acid residue (D-Lac), 1 pipecolic acid residue (Pip), 1 aspartic acid residue (Asp), 1 isoleucine residue (Ile), 1 glycine residue (Gly), 1 tyrosine residue (Tyr) and 4 valine residues (Val). The Asp, Ile and 3 Val residues are N-methylated by the 5 methyltransferase domains from the NRPS (found in modules 3, 5, 6, 7 and 9), whereas the Tyr residue is O-methylated by the cluster encoded O-methyltransferase kk1A. The thioesterase kk1J is likely to be involved in the corrective mechanism of peptide chain synthesis. The D-lactate dehydrogenase kk1H is involved in the synthesis of D-lactic acid from pyruvic acid, which is recognized by the A domain of the first kk1B module. The pyrroline-5-carboxylate reductase kk1I is involved in the synthesis of the L-pipecolic acid residue of KK-1 from delta-1-pyrroline-5-carboxylate (P5C), a metabolic intermediate of lysine. It is still unclear how kk1C and kk1D are involved in the production of KK-1. The polypeptide is Putative amidase kk1C (Curvularia clavata).